Reading from the N-terminus, the 492-residue chain is Probable cobyric acid synthase (492 aa).

One can recognise a GATase cobBQ-type domain in the interval Pro252 to Phe444. Cys330 (nucleophile) is an active-site residue. His436 is a catalytic residue.

This sequence belongs to the CobB/CobQ family. CobQ subfamily.

It participates in cofactor biosynthesis; adenosylcobalamin biosynthesis. In terms of biological role, catalyzes amidations at positions B, D, E, and G on adenosylcobyrinic A,C-diamide. NH(2) groups are provided by glutamine, and one molecule of ATP is hydrogenolyzed for each amidation. This Methanococcus maripaludis (strain C5 / ATCC BAA-1333) protein is Probable cobyric acid synthase.